The chain runs to 573 residues: Sulfite reductase [NADPH] hemoprotein beta-component (573 aa).

Cysteine 438, cysteine 444, cysteine 483, and cysteine 487 together coordinate [4Fe-4S] cluster. Cysteine 487 is a siroheme binding site.

Belongs to the nitrite and sulfite reductase 4Fe-4S domain family. Alpha(8)-beta(8). The alpha component is a flavoprotein, the beta component is a hemoprotein. Requires siroheme as cofactor. The cofactor is [4Fe-4S] cluster.

It catalyses the reaction hydrogen sulfide + 3 NADP(+) + 3 H2O = sulfite + 3 NADPH + 4 H(+). The protein operates within sulfur metabolism; hydrogen sulfide biosynthesis; hydrogen sulfide from sulfite (NADPH route): step 1/1. Functionally, component of the sulfite reductase complex that catalyzes the 6-electron reduction of sulfite to sulfide. This is one of several activities required for the biosynthesis of L-cysteine from sulfate. The chain is Sulfite reductase [NADPH] hemoprotein beta-component from Geobacillus thermodenitrificans (strain NG80-2).